The sequence spans 418 residues: RuvB-like helicase 2 (418 aa).

65–72 (GDRGSGKT) lines the ATP pocket.

It belongs to the RuvB family. Component of the SWR1 chromatin remodeling complex, the INO80 chromatin remodeling complex, and of the R2TP complex.

Its subcellular location is the nucleus. It catalyses the reaction ATP + H2O = ADP + phosphate + H(+). In terms of biological role, DNA helicase which participates in several chromatin remodeling complexes, including the SWR1 and the INO80 complexes. The SWR1 complex mediates the ATP-dependent exchange of histone H2A for the H2A variant HZT1 leading to transcriptional regulation of selected genes by chromatin remodeling. The INO80 complex remodels chromatin by shifting nucleosomes and is involved in DNA repair. Also involved in pre-rRNA processing. In Encephalitozoon cuniculi (strain GB-M1) (Microsporidian parasite), this protein is RuvB-like helicase 2 (RVB2).